A 417-amino-acid polypeptide reads, in one-letter code: NADH-quinone oxidoreductase subunit D (417 aa).

The protein belongs to the complex I 49 kDa subunit family. NDH-1 is composed of 14 different subunits. Subunits NuoB, C, D, E, F, and G constitute the peripheral sector of the complex.

The protein localises to the cell inner membrane. It catalyses the reaction a quinone + NADH + 5 H(+)(in) = a quinol + NAD(+) + 4 H(+)(out). Functionally, NDH-1 shuttles electrons from NADH, via FMN and iron-sulfur (Fe-S) centers, to quinones in the respiratory chain. The immediate electron acceptor for the enzyme in this species is believed to be ubiquinone. Couples the redox reaction to proton translocation (for every two electrons transferred, four hydrogen ions are translocated across the cytoplasmic membrane), and thus conserves the redox energy in a proton gradient. The chain is NADH-quinone oxidoreductase subunit D from Dechloromonas aromatica (strain RCB).